Reading from the N-terminus, the 365-residue chain is Chorismate synthase (365 aa).

Arg-46 serves as a coordination point for NADP(+). FMN is bound by residues Arg-123–Ser-125, Asn-241–Gly-242, Gly-281, Lys-296–Ser-300, and Arg-322.

The protein belongs to the chorismate synthase family. Homotetramer. FMNH2 is required as a cofactor.

It carries out the reaction 5-O-(1-carboxyvinyl)-3-phosphoshikimate = chorismate + phosphate. It functions in the pathway metabolic intermediate biosynthesis; chorismate biosynthesis; chorismate from D-erythrose 4-phosphate and phosphoenolpyruvate: step 7/7. Functionally, catalyzes the anti-1,4-elimination of the C-3 phosphate and the C-6 proR hydrogen from 5-enolpyruvylshikimate-3-phosphate (EPSP) to yield chorismate, which is the branch point compound that serves as the starting substrate for the three terminal pathways of aromatic amino acid biosynthesis. This reaction introduces a second double bond into the aromatic ring system. The polypeptide is Chorismate synthase (Helicobacter pylori (strain J99 / ATCC 700824) (Campylobacter pylori J99)).